A 297-amino-acid polypeptide reads, in one-letter code: UTP--glucose-1-phosphate uridylyltransferase YngB (297 aa).

The N-terminal stretch at 1–27 is a signal peptide; the sequence is MRKKVRKAVIPAAGLGTRFLPATKAQP.

It belongs to the UDPGP type 2 family. Homodimer.

The enzyme catalyses alpha-D-glucose 1-phosphate + UTP + H(+) = UDP-alpha-D-glucose + diphosphate. Its pathway is glycolipid metabolism; diglucosyl-diacylglycerol biosynthesis. Catalyzes the formation of UDP-glucose from glucose-1-phosphate and UTP. This is an intermediate step in the biosynthesis of diglucosyl-diacylglycerol (Glc2-DAG), i.e. the predominant glycolipid found in B.subtilis membrane, which is also used as a membrane anchor for lipoteichoic acid (LTA). YngB contributes to wall teichoic acid (WTA) glucosylation and glycolipid formation under anaerobic fermentative growth conditions. Might also enter other glycosylation pathways, leading to the decorating of other cell envelope components with glucose residues under anaerobic or other growth conditions. The sequence is that of UTP--glucose-1-phosphate uridylyltransferase YngB (yngB) from Bacillus subtilis (strain 168).